The following is a 350-amino-acid chain: Mitochondrial glycine transporter (350 aa).

Solcar repeat units lie at residues 23–107, 134–218, and 250–334; these read SKPK…LRQC, LSHT…SKKN, and SSIS…LILK. 6 consecutive transmembrane segments (helical) span residues 29–54, 82–108, 140–165, 193–216, 254–280, and 309–327; these read FIAG…TRIQ, GTLP…RQCI, LLTG…VRYE, GFGA…EQSK, VNFV…KTRL, and GLGL…AWTV.

Belongs to the mitochondrial carrier (TC 2.A.29) family. SLC25A38 subfamily.

Its subcellular location is the mitochondrion inner membrane. The catalysed reaction is glycine(in) = glycine(out). Functionally, mitochondrial glycine transporter that imports glycine into the mitochondrial matrix. Plays an important role in providing glycine for the first enzymatic step in heme biosynthesis, the condensation of glycine with succinyl-CoA to produce 5-aminolevulinate (ALA) in the mitochondrial matrix. The sequence is that of Mitochondrial glycine transporter from Ajellomyces capsulatus (strain NAm1 / WU24) (Darling's disease fungus).